The sequence spans 382 residues: Succinate--CoA ligase [ADP-forming] subunit beta (382 aa).

Residues 9–240 (KELFAKYGVK…PRDITEFEAY (232 aa)) enclose the ATP-grasp domain. ATP contacts are provided by residues Lys-45, 52-54 (GRG), Leu-94, and Glu-99. Residues Asn-193 and Asp-207 each contribute to the Mg(2+) site. Substrate is bound by residues Asn-260 and 317 to 319 (GIT).

Belongs to the succinate/malate CoA ligase beta subunit family. Heterotetramer of two alpha and two beta subunits. Mg(2+) serves as cofactor.

It catalyses the reaction succinate + ATP + CoA = succinyl-CoA + ADP + phosphate. The enzyme catalyses GTP + succinate + CoA = succinyl-CoA + GDP + phosphate. It participates in carbohydrate metabolism; tricarboxylic acid cycle; succinate from succinyl-CoA (ligase route): step 1/1. Its function is as follows. Succinyl-CoA synthetase functions in the citric acid cycle (TCA), coupling the hydrolysis of succinyl-CoA to the synthesis of either ATP or GTP and thus represents the only step of substrate-level phosphorylation in the TCA. The beta subunit provides nucleotide specificity of the enzyme and binds the substrate succinate, while the binding sites for coenzyme A and phosphate are found in the alpha subunit. This is Succinate--CoA ligase [ADP-forming] subunit beta from Pyrobaculum calidifontis (strain DSM 21063 / JCM 11548 / VA1).